Here is a 325-residue protein sequence, read N- to C-terminus: Histone-lysine N-methyltransferase ATXR4 (325 aa).

A signal peptide spans 1 to 30; sequence MSRLALNRYSRCFSRLKTLTTPLFFSSSAA. Residues 42-295 enclose the SET domain; the sequence is PPIRVGLTES…EGEELRICYI (254 aa).

It belongs to the class V-like SAM-binding methyltransferase superfamily. Histone-lysine methyltransferase family. TRX/MLL subfamily.

It is found in the nucleus. It catalyses the reaction L-lysyl-[histone] + S-adenosyl-L-methionine = N(6)-methyl-L-lysyl-[histone] + S-adenosyl-L-homocysteine + H(+). Its function is as follows. Histone methyltransferase. This is Histone-lysine N-methyltransferase ATXR4 (ATXR4) from Arabidopsis thaliana (Mouse-ear cress).